The chain runs to 85 residues: Large ribosomal subunit protein bL31B (85 aa).

The protein belongs to the bacterial ribosomal protein bL31 family. Type B subfamily. Part of the 50S ribosomal subunit.

This chain is Large ribosomal subunit protein bL31B, found in Serratia proteamaculans (strain 568).